Consider the following 359-residue polypeptide: Structure-specific endonuclease subunit SLX1 homolog (359 aa).

The GIY-YIG domain maps to 9–91 (GLFACYCLVA…TYPTRSRYVN (83 aa)). An SLX1-type zinc finger spans residues 192-238 (CPICQDGVSPSNVQCMQCSARFCITCAGKLFTRRNTLIPCFGKCPIC). Residues 256 to 359 (VAGRKSVPHK…LPSDVISITD (104 aa)) are disordered. The segment covering 269–281 (VDGQSSLSQNSSY) has biased composition (polar residues). Residues 295-306 (EPEKDDISRDES) are compositionally biased toward basic and acidic residues. The segment covering 316–326 (SSVALSDSSRS) has biased composition (low complexity).

The protein belongs to the SLX1 family. In terms of assembly, forms a heterodimer with a member of the SLX4 family. A divalent metal cation is required as a cofactor.

The protein localises to the nucleus. Its function is as follows. Catalytic subunit of a heterodimeric structure-specific endonuclease that resolves DNA secondary structures generated during DNA repair and recombination. Has endonuclease activity towards branched DNA substrates, introducing single-strand cuts in duplex DNA close to junctions with ss-DNA. The sequence is that of Structure-specific endonuclease subunit SLX1 homolog from Giardia intestinalis (strain ATCC 50803 / WB clone C6) (Giardia lamblia).